The following is a 122-amino-acid chain: Large ribosomal subunit protein uL14c (122 aa).

The protein belongs to the universal ribosomal protein uL14 family. As to quaternary structure, part of the 50S ribosomal subunit.

It localises to the plastid. The protein resides in the chloroplast. Functionally, binds to 23S rRNA. In Lotus japonicus (Lotus corniculatus var. japonicus), this protein is Large ribosomal subunit protein uL14c.